The primary structure comprises 352 residues: Histidinol-phosphate aminotransferase (352 aa).

K208 carries the post-translational modification N6-(pyridoxal phosphate)lysine.

It belongs to the class-II pyridoxal-phosphate-dependent aminotransferase family. Histidinol-phosphate aminotransferase subfamily. Homodimer. Requires pyridoxal 5'-phosphate as cofactor.

It carries out the reaction L-histidinol phosphate + 2-oxoglutarate = 3-(imidazol-4-yl)-2-oxopropyl phosphate + L-glutamate. Its pathway is amino-acid biosynthesis; L-histidine biosynthesis; L-histidine from 5-phospho-alpha-D-ribose 1-diphosphate: step 7/9. In Streptococcus sanguinis (strain SK36), this protein is Histidinol-phosphate aminotransferase.